A 371-amino-acid chain; its full sequence is F-box protein At2g26850 (371 aa).

Residues 59–105 form the F-box domain; the sequence is KMSILDLPDLPLDCILELLPPSELCTMARVCSSLRERCVSDHLWEKH.

The protein is F-box protein At2g26850 of Arabidopsis thaliana (Mouse-ear cress).